An 84-amino-acid chain; its full sequence is Beta-mammal/insect toxin Ts1 (84 aa).

Residues 1 to 20 form the signal peptide; the sequence is MKGMILFISCLLLIGIVVEC. Residues 21–82 enclose the LCN-type CS-alpha/beta domain; that stretch reads KEGYLMDHEG…VWDRATNKCG (62 aa). Intrachain disulfides connect Cys-31/Cys-81, Cys-35/Cys-57, Cys-43/Cys-62, and Cys-47/Cys-64. Cys-81 carries the cysteine amide modification.

The protein belongs to the long (4 C-C) scorpion toxin superfamily. Sodium channel inhibitor family. C-terminal amidation is important for high activity. Expressed by the venom gland.

The protein localises to the secreted. Voltage-gated sodium channels (Nav) gating-modifier. Acts both as alpha- and beta-toxin, since it affects not only activation but also inactivation of Nav channels. Binds to Nav domain DII and impairs the four Nav channel voltage sensors movements. Depending on Nav channel subtypes tested, can also bind Nav domains DIII (low affinity) and DIV (very low affinity). Acts on almost all the Nav channels tested (mammalian Nav1.2/SCN2A, Nav1.3/SCN3A, Nav1.4/SCN4A, Nav1.5/SCN5A, Nav1.6/SCN8A, Nav1.9/SCN11A, and insect DmNav1). Is highly active against both mammals and insects. Irreversibly modulates DmNav channels. Other Ts1 activities have been studied, such as immunomodulation, antimicrobial activity or exocrine secretion. This toxin exhibits an antifungal activity against filamentous fungi. In vitro, it has an important immunomodulatory effect on macrophages by stimulating the release of pro-inflammatory cytokines. It also shows an activity in exocrine secretion in pancreas, stomach and adrenal gland. The sequence is that of Beta-mammal/insect toxin Ts1 from Tityus serrulatus (Brazilian scorpion).